The sequence spans 102 residues: Large ribosomal subunit protein bL21 (102 aa).

The protein belongs to the bacterial ribosomal protein bL21 family. As to quaternary structure, part of the 50S ribosomal subunit. Contacts protein L20.

Functionally, this protein binds to 23S rRNA in the presence of protein L20. The sequence is that of Large ribosomal subunit protein bL21 from Leptospira biflexa serovar Patoc (strain Patoc 1 / Ames).